The following is a 37-amino-acid chain: TVSDPPARPAVFHSREELMNYVRELNLYFAIVGRPRY.

A Tyrosine amide modification is found at tyrosine 37.

This sequence belongs to the NPY family. Expressed by the venom duct.

It is found in the secreted. Its function is as follows. Causes hyperactivity such as jumping, rapid circling and tail flicking, after intraventicular injection into mouse brain. The chain is Neuropeptide Y2-like conopeptide from Conus betulinus (Beech cone).